The sequence spans 698 residues: Long-chain-fatty-acid--CoA ligase 1 (698 aa).

N-acetylmethionine is present on Met1. Tyr9 is modified (3'-nitrotyrosine). The helical; Signal-anchor for type III membrane protein transmembrane segment at Leu25–Ala45 threads the bilayer. Over Thr46–Val698 the chain is Cytoplasmic. Tyr84 is subject to Phosphotyrosine. O-linked (GlcNAc) serine glycosylation is present at Ser135. Lys207, Lys356, and Lys386 each carry N6-acetyllysine. At Ser620 the chain carries Phosphoserine. Lys632 is subject to N6-acetyllysine.

Belongs to the ATP-dependent AMP-binding enzyme family. It depends on Mg(2+) as a cofactor. In terms of tissue distribution, highly expressed in liver, heart, skeletal muscle, kidney and erythroid cells, and to a lesser extent in brain, lung, placenta and pancreas.

The protein localises to the mitochondrion outer membrane. The protein resides in the peroxisome membrane. Its subcellular location is the microsome membrane. It is found in the endoplasmic reticulum membrane. The catalysed reaction is a long-chain fatty acid + ATP + CoA = a long-chain fatty acyl-CoA + AMP + diphosphate. The enzyme catalyses (5Z,8Z,11Z,14Z)-eicosatetraenoate + ATP + CoA = (5Z,8Z,11Z,14Z)-eicosatetraenoyl-CoA + AMP + diphosphate. It catalyses the reaction 3,7,11,15-tetramethylhexadecanoate + ATP + CoA = phytanoyl-CoA + AMP + diphosphate. It carries out the reaction hexadecanoate + ATP + CoA = hexadecanoyl-CoA + AMP + diphosphate. The catalysed reaction is (E)-hexadec-2-enoate + ATP + CoA = (2E)-hexadecenoyl-CoA + AMP + diphosphate. The enzyme catalyses 2,6,10,14-tetramethylpentadecanoate + ATP + CoA = pristanoyl-CoA + AMP + diphosphate. It catalyses the reaction 14,15-epoxy-(5Z,8Z,11Z)-eicosatrienoate + ATP + CoA = 14,15-epoxy-(5Z,8Z,11Z)-eicosatrienoyl-CoA + AMP + diphosphate. It carries out the reaction 5-hydroxy-(6E,8Z,11Z,14Z)-eicosatetraenoate + ATP + CoA = 5-hydroxy-(6E,8Z,11Z,14Z)-eicosatetraenoyl-CoA + AMP + diphosphate. The catalysed reaction is 12-hydroxy-(5Z,8Z,10E,14Z)-eicosatetraenoate + ATP + CoA = 12-hydroxy-(5Z,8Z,10E,14Z)-eicosatetraenoyl-CoA + AMP + diphosphate. The enzyme catalyses 15-hydroxy-(5Z,8Z,11Z,13E)-eicosatetraenoate + ATP + CoA = 15-hydroxy-(5Z,8Z,11Z,13E)-eicosatetraenoyl-CoA + AMP + diphosphate. It catalyses the reaction (9Z)-octadecenoate + ATP + CoA = (9Z)-octadecenoyl-CoA + AMP + diphosphate. Inhibited at high temperature and by arachidonate. Catalyzes the conversion of long-chain fatty acids to their active form acyl-CoAs for both synthesis of cellular lipids, and degradation via beta-oxidation. Preferentially uses palmitoleate, oleate and linoleate. Preferentially activates arachidonate than epoxyeicosatrienoic acids (EETs) or hydroxyeicosatrienoic acids (HETEs). The polypeptide is Long-chain-fatty-acid--CoA ligase 1 (Homo sapiens (Human)).